The sequence spans 184 residues: Mitochondrial import inner membrane translocase subunit Tim22 (184 aa).

2 cysteine pairs are disulfide-bonded: Cys59/Cys131 and Cys150/Cys169. Transmembrane regions (helical) follow at residues 64–84, 115–133, and 160–180; these read ALAC…TAGI, YAKN…ECLV, and AGLK…AVID.

It belongs to the Tim17/Tim22/Tim23 family. Core component of the TIM22 complex.

It localises to the mitochondrion inner membrane. Functionally, essential core component of the TIM22 complex, a complex that mediates the import and insertion of multi-pass transmembrane proteins into the mitochondrial inner membrane. In the TIM22 complex, it constitutes the voltage-activated and signal-gated channel. Forms a twin-pore translocase that uses the membrane potential as external driving force in 2 voltage-dependent steps. The sequence is that of Mitochondrial import inner membrane translocase subunit Tim22 (timm22) from Xenopus laevis (African clawed frog).